The chain runs to 512 residues: rRNA N(6)-adenosine-methyltransferase ZCCHC4 (512 aa).

Positions 39, 41, 63, 72, 124, 127, 139, and 142 each coordinate Zn(2+). The GRF-type zinc finger occupies 39 to 81 (CPHGPTLLFVKVNQGKEETRKFYACSACRDRKDCNFFQWEDEK). S-adenosyl-L-methionine is bound by residues 171-174 (QYLF), R201, D223, 241-242 (NM), and D274. The tract at residues 335–355 (QVDYDNHALYKHGKTGRKQSP) is regulatory loop. The Zn(2+) site is built by C378, C381, H391, C392, C395, C398, H408, C409, C412, C415, H422, C423, C426, C429, H434, and C436. In terms of domain architecture, DHHC spans 393-445 (VHCNSCTSKDGRKWSHCFLCKKCVKPSWIHCNTCNRCALPDHSCLGPKDGCFI). The CCHC-type zinc finger occupies 441–458 (DGCFICGALDHKRSNCPN).

It belongs to the ZCCHC4 family. As to quaternary structure, interacts with components of the ASC-1 complex TRIP4, ASCC1, ASCC2 and ASCC3. Interact with AHCYL1 and AHCYL2. Interact with YTHDC2.

It localises to the cytoplasm. The protein resides in the nucleus. The protein localises to the nucleolus. The enzyme catalyses adenosine(4220) in 28S rRNA + S-adenosyl-L-methionine = N(6)-methyladenosine(4220) in 28S rRNA + S-adenosyl-L-homocysteine + H(+). In terms of biological role, rRNA N6-methyltransferase that specifically methylates the adenine in position 4220 of 28S rRNA. N6-methylation of adenine(4220) in 28S rRNA is required for translation. This chain is rRNA N(6)-adenosine-methyltransferase ZCCHC4, found in Mus musculus (Mouse).